We begin with the raw amino-acid sequence, 100 residues long: Urease subunit gamma (100 aa).

It belongs to the urease gamma subunit family. As to quaternary structure, heterotrimer of UreA (gamma), UreB (beta) and UreC (alpha) subunits. Three heterotrimers associate to form the active enzyme.

The protein resides in the cytoplasm. The catalysed reaction is urea + 2 H2O + H(+) = hydrogencarbonate + 2 NH4(+). The protein operates within nitrogen metabolism; urea degradation; CO(2) and NH(3) from urea (urease route): step 1/1. The sequence is that of Urease subunit gamma from Escherichia coli.